The chain runs to 277 residues: MAIVKMKPTSAGRRGMVRVVTEGLHKGAPYAPLLEKKNSTAGRNNNGHITTRHKGGGHKHHYRVVDFKRNKDGISAKVERIEYDPNRTAFIALLCYADGERRYIIAPRGIQAGVVLVSGAEAAIKVGNTLPIRNIPVGTTIHCIEMKPGKGAQIARSAGASAVLLAKEGAYAQVRLRSGEVRKINVDCRATIGEVGNEEQSLKKIGKAGANRWRGIRPTVRGVVMNPVDHPHGGGEGRTGEAREPVSPWGTPAKGYRTRNNKRTDNMIVRRRYSNKG.

Disordered stretches follow at residues 37–60 and 223–264; these read KNSTAGRNNNGHITTRHKGGGHKH and VVMN…NKRT. The span at 39–49 shows a compositional bias: polar residues; it reads STAGRNNNGHI. The span at 50-60 shows a compositional bias: basic residues; it reads TTRHKGGGHKH. Positions 229-244 are enriched in basic and acidic residues; sequence DHPHGGGEGRTGEARE.

This sequence belongs to the universal ribosomal protein uL2 family. Part of the 50S ribosomal subunit. Forms a bridge to the 30S subunit in the 70S ribosome.

In terms of biological role, one of the primary rRNA binding proteins. Required for association of the 30S and 50S subunits to form the 70S ribosome, for tRNA binding and peptide bond formation. It has been suggested to have peptidyltransferase activity; this is somewhat controversial. Makes several contacts with the 16S rRNA in the 70S ribosome. The sequence is that of Large ribosomal subunit protein uL2 from Neisseria gonorrhoeae (strain ATCC 700825 / FA 1090).